Reading from the N-terminus, the 434-residue chain is Histidinol dehydrogenase (434 aa).

Residues tyrosine 130, glutamine 188, and asparagine 211 each contribute to the NAD(+) site. 3 residues coordinate substrate: serine 237, glutamine 259, and histidine 262. Positions 259 and 262 each coordinate Zn(2+). Active-site proton acceptor residues include glutamate 326 and histidine 327. Residues histidine 327, aspartate 360, glutamate 414, and histidine 419 each contribute to the substrate site. Residue aspartate 360 participates in Zn(2+) binding. Zn(2+) is bound at residue histidine 419.

The protein belongs to the histidinol dehydrogenase family. Homodimer. It depends on Zn(2+) as a cofactor.

It catalyses the reaction L-histidinol + 2 NAD(+) + H2O = L-histidine + 2 NADH + 3 H(+). Its pathway is amino-acid biosynthesis; L-histidine biosynthesis; L-histidine from 5-phospho-alpha-D-ribose 1-diphosphate: step 9/9. In terms of biological role, catalyzes the sequential NAD-dependent oxidations of L-histidinol to L-histidinaldehyde and then to L-histidine. In Salmonella typhi, this protein is Histidinol dehydrogenase.